The sequence spans 135 residues: HTH-type transcriptional activator AarP (135 aa).

The region spanning 22 to 120 is the HTH araC/xylS-type domain; that stretch reads SEILVWIEGN…GISPSLYRLS (99 aa). 2 DNA-binding regions (H-T-H motif) span residues 39–60 and 87–110; these read DDIAQHSGYTKWHLQRVFRKIV and VIDIALKYQFDSQQSFAKRFKAYL.

In terms of biological role, transcriptional activator of 2'-N-acetyltransferase. This chain is HTH-type transcriptional activator AarP (aarP), found in Providencia stuartii.